The following is a 475-amino-acid chain: Pyruvate kinase (475 aa).

Arginine 33 contacts substrate. Residues asparagine 35, serine 37, and aspartate 67 each contribute to the K(+) site. 35–38 (NFSH) contributes to the ATP binding site. ATP is bound by residues arginine 74 and lysine 155. Residue glutamate 220 participates in Mg(2+) binding. The substrate site is built by glycine 243, aspartate 244, and threonine 276. Aspartate 244 contacts Mg(2+).

It belongs to the pyruvate kinase family. In terms of assembly, homotetramer. Mg(2+) is required as a cofactor. K(+) serves as cofactor.

It catalyses the reaction pyruvate + ATP = phosphoenolpyruvate + ADP + H(+). It functions in the pathway carbohydrate degradation; glycolysis; pyruvate from D-glyceraldehyde 3-phosphate: step 5/5. This is Pyruvate kinase (pyk) from Corynebacterium glutamicum (strain ATCC 13032 / DSM 20300 / JCM 1318 / BCRC 11384 / CCUG 27702 / LMG 3730 / NBRC 12168 / NCIMB 10025 / NRRL B-2784 / 534).